The primary structure comprises 643 residues: Fructose-1,6-bisphosphatase class 3 (643 aa).

It belongs to the FBPase class 3 family. It depends on Mn(2+) as a cofactor.

It catalyses the reaction beta-D-fructose 1,6-bisphosphate + H2O = beta-D-fructose 6-phosphate + phosphate. It functions in the pathway carbohydrate biosynthesis; gluconeogenesis. This is Fructose-1,6-bisphosphatase class 3 from Lacticaseibacillus paracasei (strain ATCC 334 / BCRC 17002 / CCUG 31169 / CIP 107868 / KCTC 3260 / NRRL B-441) (Lactobacillus paracasei).